The sequence spans 183 residues: Ribosome-recycling factor (183 aa).

Belongs to the RRF family.

It localises to the cytoplasm. Responsible for the release of ribosomes from messenger RNA at the termination of protein biosynthesis. May increase the efficiency of translation by recycling ribosomes from one round of translation to another. This is Ribosome-recycling factor from Mycoplasmoides gallisepticum (strain R(low / passage 15 / clone 2)) (Mycoplasma gallisepticum).